The primary structure comprises 27 residues: Carcinustatin-20 (27 aa).

Leu27 carries the post-translational modification Leucine amide.

This sequence belongs to the allatostatin family.

The protein localises to the secreted. In terms of biological role, may act as a neurotransmitter or neuromodulator. The polypeptide is Carcinustatin-20 (Carcinus maenas (Common shore crab)).